The following is a 155-amino-acid chain: 3-hydroxyacyl-[acyl-carrier-protein] dehydratase FabZ (155 aa).

Histidine 61 is an active-site residue.

The protein belongs to the thioester dehydratase family. FabZ subfamily.

Its subcellular location is the cytoplasm. The catalysed reaction is a (3R)-hydroxyacyl-[ACP] = a (2E)-enoyl-[ACP] + H2O. Functionally, involved in unsaturated fatty acids biosynthesis. Catalyzes the dehydration of short chain beta-hydroxyacyl-ACPs and long chain saturated and unsaturated beta-hydroxyacyl-ACPs. In Synechococcus sp. (strain ATCC 27144 / PCC 6301 / SAUG 1402/1) (Anacystis nidulans), this protein is 3-hydroxyacyl-[acyl-carrier-protein] dehydratase FabZ.